A 339-amino-acid polypeptide reads, in one-letter code: Ribosomal RNA small subunit methyltransferase H (339 aa).

S-adenosyl-L-methionine is bound by residues 44–46, Asp-61, Phe-88, Asp-105, and Gln-112; that span reads GGY. The tract at residues 263–312 is disordered; it reads PQAQSRHLPEKAAAQPVFEKPMKPVSPGEAETAENPRARSAHLRAARRTA. Basic residues predominate over residues 301 to 312; that stretch reads RSAHLRAARRTA.

It belongs to the methyltransferase superfamily. RsmH family.

It is found in the cytoplasm. The catalysed reaction is cytidine(1402) in 16S rRNA + S-adenosyl-L-methionine = N(4)-methylcytidine(1402) in 16S rRNA + S-adenosyl-L-homocysteine + H(+). Functionally, specifically methylates the N4 position of cytidine in position 1402 (C1402) of 16S rRNA. This is Ribosomal RNA small subunit methyltransferase H from Chelativorans sp. (strain BNC1).